Reading from the N-terminus, the 501-residue chain is Aldehyde dehydrogenase 1A1 (501 aa).

Ser2 is modified (N-acetylserine). Lys91 and Lys128 each carry N6-acetyllysine. Residues Ile167–Asn170, Lys193–Glu196, Gly226–Pro227, and Gly246–Ser247 each bind NAD(+). An N6-acetyllysine modification is found at Lys252. The active-site Proton acceptor is the Glu269. Position 269-271 (Glu269–Gly271) interacts with NAD(+). Cys303 acts as the Nucleophile in catalysis. The mediates interaction with PRMT3 stretch occupies residues Leu336–Ser501. Thr337 is modified (phosphothreonine). Position 349–353 (Glu349–Lys353) interacts with NAD(+). 2 positions are modified to N6-acetyllysine: Lys353 and Lys367. Glu400–Phe402 serves as a coordination point for NAD(+). Lys410 is subject to N6-acetyllysine. Phosphoserine is present on Ser413. Lys419, Lys435, and Lys495 each carry N6-acetyllysine.

The protein belongs to the aldehyde dehydrogenase family. As to quaternary structure, homotetramer. Interacts with PRMT3; the interaction is direct, inhibits ALDH1A1 aldehyde dehydrogenase activity and is independent of the methyltransferase activity of PRMT3. Post-translationally, the N-terminus is blocked most probably by acetylation. Strongly expressed in kidney, lung, testis, intestine, stomach, and trachea, but weakly in the liver.

The protein localises to the cytoplasm. It localises to the cytosol. The protein resides in the cell projection. It is found in the axon. The enzyme catalyses an aldehyde + NAD(+) + H2O = a carboxylate + NADH + 2 H(+). The catalysed reaction is all-trans-retinal + NAD(+) + H2O = all-trans-retinoate + NADH + 2 H(+). It catalyses the reaction 9-cis-retinal + NAD(+) + H2O = 9-cis-retinoate + NADH + 2 H(+). It carries out the reaction 11-cis-retinal + NAD(+) + H2O = 11-cis-retinoate + NADH + 2 H(+). The enzyme catalyses 13-cis-retinal + NAD(+) + H2O = 13-cis-retinoate + NADH + 2 H(+). The catalysed reaction is 3-deoxyglucosone + NAD(+) + H2O = 2-dehydro-3-deoxy-D-gluconate + NADH + 2 H(+). It catalyses the reaction (E)-4-hydroxynon-2-enal + NAD(+) + H2O = (E)-4-hydroxynon-2-enoate + NADH + 2 H(+). It carries out the reaction malonaldehyde + NAD(+) + H2O = 3-oxopropanoate + NADH + 2 H(+). The enzyme catalyses hexanal + NAD(+) + H2O = hexanoate + NADH + 2 H(+). The catalysed reaction is propanal + NAD(+) + H2O = propanoate + NADH + 2 H(+). It catalyses the reaction acetaldehyde + NAD(+) + H2O = acetate + NADH + 2 H(+). It carries out the reaction benzaldehyde + NAD(+) + H2O = benzoate + NADH + 2 H(+). The enzyme catalyses 4-aminobutanal + NAD(+) + H2O = 4-aminobutanoate + NADH + 2 H(+). It functions in the pathway cofactor metabolism; retinol metabolism. Inhibited by chloral hydrate. In terms of biological role, cytosolic dehydrogenase that catalyzes the irreversible oxidation of a wide range of aldehydes to their corresponding carboxylic acid. Functions downstream of retinol dehydrogenases and catalyzes the oxidation of retinaldehyde into retinoic acid, the second step in the oxidation of retinol/vitamin A into retinoic acid. This pathway is crucial to control the levels of retinol and retinoic acid, two important molecules which excess can be teratogenic and cytotoxic. Also oxidizes aldehydes resulting from lipid peroxidation like (E)-4-hydroxynon-2-enal/HNE, malonaldehyde and hexanal that form protein adducts and are highly cytotoxic. By participating for instance to the clearance of (E)-4-hydroxynon-2-enal/HNE in the lens epithelium prevents the formation of HNE-protein adducts and lens opacification. Functions also downstream of fructosamine-3-kinase in the fructosamine degradation pathway by catalyzing the oxidation of 3-deoxyglucosone, the carbohydrate product of fructosamine 3-phosphate decomposition, which is itself a potent glycating agent that may react with lysine and arginine side-chains of proteins. Also has an aminobutyraldehyde dehydrogenase activity and is probably part of an alternative pathway for the biosynthesis of GABA/4-aminobutanoate in midbrain, thereby playing a role in GABAergic synaptic transmission. The chain is Aldehyde dehydrogenase 1A1 from Rattus norvegicus (Rat).